Here is a 743-residue protein sequence, read N- to C-terminus: Phosphoribosylformylglycinamidine synthase subunit PurL (743 aa).

Histidine 50 is an active-site residue. ATP contacts are provided by tyrosine 53 and lysine 92. Glutamate 94 is a Mg(2+) binding site. Substrate contacts are provided by residues 95–98 (SHNH) and arginine 117. The active-site Proton acceptor is the histidine 96. A Mg(2+)-binding site is contributed by aspartate 118. Residue glutamine 241 coordinates substrate. Aspartate 269 is a binding site for Mg(2+). 313 to 315 (ESQ) is a binding site for substrate. ATP-binding residues include aspartate 495 and glycine 532. Asparagine 533 is a binding site for Mg(2+). Substrate is bound at residue serine 535.

Belongs to the FGAMS family. In terms of assembly, monomer. Part of the FGAM synthase complex composed of 1 PurL, 1 PurQ and 2 PurS subunits.

The protein resides in the cytoplasm. The enzyme catalyses N(2)-formyl-N(1)-(5-phospho-beta-D-ribosyl)glycinamide + L-glutamine + ATP + H2O = 2-formamido-N(1)-(5-O-phospho-beta-D-ribosyl)acetamidine + L-glutamate + ADP + phosphate + H(+). Its pathway is purine metabolism; IMP biosynthesis via de novo pathway; 5-amino-1-(5-phospho-D-ribosyl)imidazole from N(2)-formyl-N(1)-(5-phospho-D-ribosyl)glycinamide: step 1/2. In terms of biological role, part of the phosphoribosylformylglycinamidine synthase complex involved in the purines biosynthetic pathway. Catalyzes the ATP-dependent conversion of formylglycinamide ribonucleotide (FGAR) and glutamine to yield formylglycinamidine ribonucleotide (FGAM) and glutamate. The FGAM synthase complex is composed of three subunits. PurQ produces an ammonia molecule by converting glutamine to glutamate. PurL transfers the ammonia molecule to FGAR to form FGAM in an ATP-dependent manner. PurS interacts with PurQ and PurL and is thought to assist in the transfer of the ammonia molecule from PurQ to PurL. This chain is Phosphoribosylformylglycinamidine synthase subunit PurL, found in Rhizobium etli (strain ATCC 51251 / DSM 11541 / JCM 21823 / NBRC 15573 / CFN 42).